A 350-amino-acid chain; its full sequence is MSNSWWLKPAQAIDVPMREAALARQQQLTKPAGSLAQLERLAVQLAGLQGRERPAADKLWIAIFAGDHGVVAEGVSAYPQEVTGQMLHNFVNGGAAISVLARQLSAQLDVVDLGTVAPLDLPGVRHLRIGAGTANFAHGPAMSAEQGLAALQAGRDSVLRAKAVGTELFIGGEMGIGNTTAASAVACSVLECAAPLLVGPGTGLNAEGIEHKTRVIERALALHAEQAGDPLHSLFCLGGFEIAALTGAYLACAQEGIVALVDGFICSVAALVAVRLNPSCRNWLLFGHRGAEPGHRHLLETLQAEPLLDLGLRLGEGSGAALAVPLVRLACELHNGMATFAEAAVADRPA.

The Proton acceptor role is filled by Glu-316.

This sequence belongs to the CobT family.

It carries out the reaction 5,6-dimethylbenzimidazole + nicotinate beta-D-ribonucleotide = alpha-ribazole 5'-phosphate + nicotinate + H(+). It functions in the pathway nucleoside biosynthesis; alpha-ribazole biosynthesis; alpha-ribazole from 5,6-dimethylbenzimidazole: step 1/2. Catalyzes the synthesis of alpha-ribazole-5'-phosphate from nicotinate mononucleotide (NAMN) and 5,6-dimethylbenzimidazole (DMB). The sequence is that of Nicotinate-nucleotide--dimethylbenzimidazole phosphoribosyltransferase from Pseudomonas savastanoi pv. phaseolicola (strain 1448A / Race 6) (Pseudomonas syringae pv. phaseolicola (strain 1448A / Race 6)).